A 169-amino-acid polypeptide reads, in one-letter code: Shikimate kinase (169 aa).

Residue 12–17 coordinates ATP; the sequence is GCGKST. Serine 16 provides a ligand contact to Mg(2+). 3 residues coordinate substrate: aspartate 34, arginine 57, and glycine 79. Residue arginine 116 coordinates ATP. Substrate is bound at residue arginine 133.

The protein belongs to the shikimate kinase family. As to quaternary structure, monomer. It depends on Mg(2+) as a cofactor.

It is found in the cytoplasm. It catalyses the reaction shikimate + ATP = 3-phosphoshikimate + ADP + H(+). The protein operates within metabolic intermediate biosynthesis; chorismate biosynthesis; chorismate from D-erythrose 4-phosphate and phosphoenolpyruvate: step 5/7. In terms of biological role, catalyzes the specific phosphorylation of the 3-hydroxyl group of shikimic acid using ATP as a cosubstrate. The polypeptide is Shikimate kinase (Clostridium beijerinckii (strain ATCC 51743 / NCIMB 8052) (Clostridium acetobutylicum)).